The primary structure comprises 345 residues: Hydroxymethylglutaryl-CoA synthase (345 aa).

Aspartate 28 lines the (3S)-3-hydroxy-3-methylglutaryl-CoA pocket. Catalysis depends on glutamate 80, which acts as the Proton donor/acceptor. (3S)-3-hydroxy-3-methylglutaryl-CoA is bound by residues cysteine 112 and threonine 153. The Acyl-thioester intermediate role is filled by cysteine 112. Arginine 199 is a binding site for CoA. 2 residues coordinate (3S)-3-hydroxy-3-methylglutaryl-CoA: threonine 201 and histidine 234. Catalysis depends on histidine 234, which acts as the Proton donor/acceptor. Lysine 239 contributes to the CoA binding site. (3S)-3-hydroxy-3-methylglutaryl-CoA-binding residues include arginine 243, asparagine 266, and serine 296.

Belongs to the thiolase-like superfamily. Archaeal HMG-CoA synthase family. As to quaternary structure, interacts with acetoacetyl-CoA thiolase that catalyzes the precedent step in the pathway and with a DUF35 protein. The acetoacetyl-CoA thiolase/HMG-CoA synthase complex channels the intermediate via a fused CoA-binding site, which allows for efficient coupling of the endergonic thiolase reaction with the exergonic HMGCS reaction.

It catalyses the reaction acetoacetyl-CoA + acetyl-CoA + H2O = (3S)-3-hydroxy-3-methylglutaryl-CoA + CoA + H(+). It participates in metabolic intermediate biosynthesis; (R)-mevalonate biosynthesis; (R)-mevalonate from acetyl-CoA: step 2/3. In terms of biological role, catalyzes the condensation of acetyl-CoA with acetoacetyl-CoA to form 3-hydroxy-3-methylglutaryl-CoA (HMG-CoA). Functions in the mevalonate (MVA) pathway leading to isopentenyl diphosphate (IPP), a key precursor for the biosynthesis of isoprenoid compounds that are building blocks of archaeal membrane lipids. In Methanobrevibacter smithii (strain ATCC 35061 / DSM 861 / OCM 144 / PS), this protein is Hydroxymethylglutaryl-CoA synthase.